The chain runs to 474 residues: tRNA-2-methylthio-N(6)-dimethylallyladenosine synthase (474 aa).

Residues 3–120 (KKLHIKTWGC…LPEMINHVQG (118 aa)) enclose the MTTase N-terminal domain. [4Fe-4S] cluster contacts are provided by C12, C49, C83, C157, C161, and C164. One can recognise a Radical SAM core domain in the interval 143–375 (RAEGPTAFVS…QQRITQQAME (233 aa)). The region spanning 378–441 (REMVGTVQRI…ASSLRGILLR (64 aa)) is the TRAM domain.

It belongs to the methylthiotransferase family. MiaB subfamily. As to quaternary structure, monomer. The cofactor is [4Fe-4S] cluster.

It localises to the cytoplasm. The catalysed reaction is N(6)-dimethylallyladenosine(37) in tRNA + (sulfur carrier)-SH + AH2 + 2 S-adenosyl-L-methionine = 2-methylsulfanyl-N(6)-dimethylallyladenosine(37) in tRNA + (sulfur carrier)-H + 5'-deoxyadenosine + L-methionine + A + S-adenosyl-L-homocysteine + 2 H(+). In terms of biological role, catalyzes the methylthiolation of N6-(dimethylallyl)adenosine (i(6)A), leading to the formation of 2-methylthio-N6-(dimethylallyl)adenosine (ms(2)i(6)A) at position 37 in tRNAs that read codons beginning with uridine. This chain is tRNA-2-methylthio-N(6)-dimethylallyladenosine synthase, found in Yersinia enterocolitica serotype O:8 / biotype 1B (strain NCTC 13174 / 8081).